Here is a 594-residue protein sequence, read N- to C-terminus: Solute carrier family 22 member 14 (594 aa).

The Cytoplasmic segment spans residues 1–70 (MAGEENFKEE…EFGTFQQRLV (70 aa)). The helical transmembrane segment at 71-91 (ALTFIPSIMSAFFMFADHFVF) threads the bilayer. The Extracellular portion of the chain corresponds to 92-184 (TAQKPYCNTS…LVCGMETKKD (93 aa)). N-linked (GlcNAc...) asparagine glycans are attached at residues Asn99, Asn117, Asn125, and Asn150. Residues 185–205 (TAQIMFMAGLPIGSLIFRLIT) form a helical membrane-spanning segment. Residues 206-210 (DKMGR) lie on the Cytoplasmic side of the membrane. The chain crosses the membrane as a helical span at residues 211–231 (YPAILLSLLGLIIFGFGTAFM). Residues 232–235 (NSFH) lie on the Extracellular side of the membrane. The chain crosses the membrane as a helical span at residues 236 to 256 (LYLFFRFGISQSVVGYAISSI). The Cytoplasmic segment spans residues 257–270 (SLATEWLVGEHRAH). A helical transmembrane segment spans residues 271 to 291 (AIILGHCFFAVGAVLLTGIAY). Over 292-297 (SLPHWQ) the chain is Extracellular. Residues 298 to 318 (LLFLVGGILVIPFISYIWILP) form a helical membrane-spanning segment. Residues 319-379 (ESPRWLMMKG…DFCKNRQLCK (61 aa)) are Cytoplasmic-facing. Residues 380–400 (VTLVMSCVWFTVSYTYFTLSL) traverse the membrane as a helical segment. At 401 to 408 (RMRELGVS) the chain is on the extracellular side. The helical transmembrane segment at 409 to 431 (VHFRHVVPSIMEVPARLCCIFLL) threads the bilayer. Residues 432–437 (QQIGRK) lie on the Cytoplasmic side of the membrane. Residues 438–458 (WSLAVTLLQAIIWCLLLLFLP) traverse the membrane as a helical segment. Topologically, residues 459 to 488 (EGEDGLRLKWPRCPATELKSMTILVLMLRE) are extracellular. A helical transmembrane segment spans residues 489–509 (FSLAATVTVFFLYTAELLPTV). Over 510-512 (LRA) the chain is Cytoplasmic. A helical membrane pass occupies residues 513–533 (TGLGLVSLASVAGAILSLTII). Residues 534 to 538 (SQTPS) are Extracellular-facing. Residues 539–559 (LLPIFLCCVLAIVAFSLSSLL) form a helical membrane-spanning segment. Topologically, residues 560-594 (PETRDQPLSESLNHSSQIRNKVKDMKTKETSSDDV) are cytoplasmic. Residues 566–594 (PLSESLNHSSQIRNKVKDMKTKETSSDDV) are disordered. The span at 567 to 578 (LSESLNHSSQIR) shows a compositional bias: polar residues. Basic and acidic residues predominate over residues 580 to 594 (KVKDMKTKETSSDDV).

The protein belongs to the major facilitator (TC 2.A.1) superfamily. Organic cation transporter (TC 2.A.1.19) family. Ubiquitous.

It is found in the mitochondrion inner membrane. The protein localises to the cell projection. The protein resides in the cilium. It localises to the flagellum membrane. It carries out the reaction riboflavin(in) = riboflavin(out). In terms of biological role, riboflavin transporter localized at the inner mitochondrial membrane of the spermatozoa midpiece, which is required for male fertility. SLC22A14-mediated riboflavin transport is essential for spermatozoa energy generation and motility: riboflavin is the precursor of FMN and FAD, which are coenzymes of many enzymes in the TCA cycle (the citric acid cycle) in mitochondria. Required for sperm motility and normal sperm flagellar structure. The polypeptide is Solute carrier family 22 member 14 (Homo sapiens (Human)).